Here is a 286-residue protein sequence, read N- to C-terminus: MTNPESTAIDPVAAMGTDHTEAPAHPLHKVLSFVRRSGRLDDRLQRAWDNYAGTYLLDIAAGNLLDVREGVTLDRAFVESAWGNDNPLIVEIGTGQGENVVAAAAAHPETNFLALEVYDPGVAHTLLLAGKQGLTNIRVAQVNAPELFKVTAAGTVAEVWTFFPDPWPKKKHHKRRIVQKAMAGDIHRALVTDGVWRIATDIEDYALHVHEVMDGLDGWKNLGSVTVSLPLEHVGKGNADMAADMPHADFTESERFEGRVLTNFEKKGLAAGRVIHDFTYQAVTLN.

The segment at 1–21 (MTNPESTAIDPVAAMGTDHTE) is disordered. S-adenosyl-L-methionine-binding residues include Glu91, Glu116, Asn143, and Asp165. The active site involves Asp165. Substrate-binding positions include Lys169, Asp201, and 262–265 (TNFE).

This sequence belongs to the class I-like SAM-binding methyltransferase superfamily. TrmB family.

It catalyses the reaction guanosine(46) in tRNA + S-adenosyl-L-methionine = N(7)-methylguanosine(46) in tRNA + S-adenosyl-L-homocysteine. It participates in tRNA modification; N(7)-methylguanine-tRNA biosynthesis. Functionally, catalyzes the formation of N(7)-methylguanine at position 46 (m7G46) in tRNA. The sequence is that of tRNA (guanine-N(7)-)-methyltransferase from Bifidobacterium longum (strain NCC 2705).